We begin with the raw amino-acid sequence, 338 residues long: Putative pectinesterase 63 (338 aa).

The signal sequence occupies residues 1–24; sequence MGYNYVSLIVTILLVVITSPVVFG. 2 residues coordinate substrate: T116 and Q151. D174 serves as the catalytic Proton donor. Residue D195 is the Nucleophile of the active site. R252 serves as a coordination point for substrate.

This sequence belongs to the pectinesterase family.

It localises to the secreted. Its subcellular location is the cell wall. It catalyses the reaction [(1-&gt;4)-alpha-D-galacturonosyl methyl ester](n) + n H2O = [(1-&gt;4)-alpha-D-galacturonosyl](n) + n methanol + n H(+). The protein operates within glycan metabolism; pectin degradation; 2-dehydro-3-deoxy-D-gluconate from pectin: step 1/5. Functionally, acts in the modification of cell walls via demethylesterification of cell wall pectin. This chain is Putative pectinesterase 63 (PME63), found in Arabidopsis thaliana (Mouse-ear cress).